The sequence spans 830 residues: Leucine--tRNA ligase (830 aa).

The 'HIGH' region motif lies at 34–44 (PYPSGNIHMGH). The 'KMSKS' region motif lies at 592–596 (KMSKS). Lysine 595 is an ATP binding site.

Belongs to the class-I aminoacyl-tRNA synthetase family.

Its subcellular location is the cytoplasm. It catalyses the reaction tRNA(Leu) + L-leucine + ATP = L-leucyl-tRNA(Leu) + AMP + diphosphate. In Ehrlichia ruminantium (strain Welgevonden), this protein is Leucine--tRNA ligase.